The following is a 127-amino-acid chain: Large ribosomal subunit protein bL17 (127 aa).

This sequence belongs to the bacterial ribosomal protein bL17 family. As to quaternary structure, part of the 50S ribosomal subunit. Contacts protein L32.

In Xanthomonas oryzae pv. oryzae (strain KACC10331 / KXO85), this protein is Large ribosomal subunit protein bL17.